Reading from the N-terminus, the 295-residue chain is Pyridoxal 5'-phosphate synthase subunit PdxS (295 aa).

D25 is a binding site for D-ribose 5-phosphate. Residue K82 is the Schiff-base intermediate with D-ribose 5-phosphate of the active site. G154 is a binding site for D-ribose 5-phosphate. R166 serves as a coordination point for D-glyceraldehyde 3-phosphate. Residues G215 and G236–S237 contribute to the D-ribose 5-phosphate site.

This sequence belongs to the PdxS/SNZ family. In the presence of PdxT, forms a dodecamer of heterodimers.

The catalysed reaction is aldehydo-D-ribose 5-phosphate + D-glyceraldehyde 3-phosphate + L-glutamine = pyridoxal 5'-phosphate + L-glutamate + phosphate + 3 H2O + H(+). It participates in cofactor biosynthesis; pyridoxal 5'-phosphate biosynthesis. Functionally, catalyzes the formation of pyridoxal 5'-phosphate from ribose 5-phosphate (RBP), glyceraldehyde 3-phosphate (G3P) and ammonia. The ammonia is provided by the PdxT subunit. Can also use ribulose 5-phosphate and dihydroxyacetone phosphate as substrates, resulting from enzyme-catalyzed isomerization of RBP and G3P, respectively. The polypeptide is Pyridoxal 5'-phosphate synthase subunit PdxS (Pasteurella multocida (strain Pm70)).